The primary structure comprises 72 residues: MKKSILFIFLSVLSFSPFAQDAKPVESSKEKITLESKKCNIAKKSNKSGPESMNSSNYCCELCCNPACTGCY.

The first 19 residues, 1–19, serve as a signal peptide directing secretion; that stretch reads MKKSILFIFLSVLSFSPFA. Positions 20 to 53 are excised as a propeptide; that stretch reads QDAKPVESSKEKITLESKKCNIAKKSNKSGPESM. Disulfide bonds link Cys59–Cys64, Cys60–Cys68, and Cys63–Cys71.

This sequence belongs to the heat-stable enterotoxin family.

It localises to the secreted. Toxin which activates the particulate form of guanylate cyclase and increases cyclic GMP levels within the host intestinal epithelial cells. This Escherichia coli protein is Heat-stable enterotoxin A3/A4 (sta3).